The chain runs to 424 residues: UPF0229 protein PputGB1_0427 (424 aa).

Positions 81–107 are disordered; it reads EFTAGEHIPRPQGGGGGGGGRGKAGNS. Gly residues predominate over residues 92–107; the sequence is QGGGGGGGGRGKAGNS.

It belongs to the UPF0229 family.

This Pseudomonas putida (strain GB-1) protein is UPF0229 protein PputGB1_0427.